The sequence spans 243 residues: Terpene cyclase ptmB (243 aa).

3 helical membrane passes run 19-39, 48-68, and 78-98; these read IANL…VGMI, YGMA…YSLI, and GVFI…IKFA. N-linked (GlcNAc...) asparagine glycosylation occurs at N111. 4 consecutive transmembrane segments (helical) span residues 112 to 132, 137 to 157, 172 to 194, and 205 to 225; these read LSLI…ALAA, SLAY…GGLC, LWLS…WMYW, and LVLW…ICYW.

It belongs to the paxB family.

The protein localises to the membrane. It functions in the pathway secondary metabolite biosynthesis. Its function is as follows. Terpene cyclase; part of the gene cluster that mediates the biosynthesis of the indole diterpenes penitrems. The geranylgeranyl diphosphate (GGPP) synthase ptmG catalyzes the first step in penitrem biosynthesis via conversion of farnesyl pyrophosphate and isopentyl pyrophosphate into geranylgeranyl pyrophosphate (GGPP). Condensation of indole-3-glycerol phosphate with GGPP by the prenyl transferase ptmC then forms 3-geranylgeranylindole (3-GGI). Epoxidation by the FAD-dependent monooxygenase ptmM leads to a epoxidized-GGI that is substrate of the terpene cyclase ptmB for cyclization to yield paspaline. Paspaline is subsequently converted to 13-desoxypaxilline by the cytochrome P450 monooxygenase ptmP, the latter being then converted to paxilline by the cytochrome P450 monooxygenase ptmQ. Paxilline is converted to beta-paxitriol via C-10 ketoreduction by the short-chain dehydrogenase ptmH which can be monoprenylated at the C-20 by the indole diterpene prenyltransferase ptmD. A two-step elimination (acetylation and elimination) process performed by the O-acetyltransferase ptmV and ptmI leads to the production of the prenylated form of penijanthine. The FAD-linked oxidoreductase ptmO then converts the prenylated form of penijanthine into PC-M5 which is in turn transformed into PC-M4 by the aromatic dimethylallyltransferase ptmE. Five sequential oxidative transformations performed by the cytochrome P450 monooxygenases ptmK, ptmU, ptmL, ptmN and ptmJ yield the various penitrem compounds. PtmK, ptmU and ptmM are involved in the formation of the key bicyclic ring of penitrem C via the formation of the intermediates secopenitrem D and penitrem D. PtmL catalyzes the epoxidation of penitrem D and C to yield penitrem B and F, respectively. PtmJ catalyzes the last benzylic hydroxylation to convert penitrem B to prenitrem E and penitrem F to penitrem A. In Penicillium ochrochloron, this protein is Terpene cyclase ptmB.